A 329-amino-acid polypeptide reads, in one-letter code: Malate dehydrogenase (329 aa).

NAD(+) is bound at residue 12–18 (GAAGQIG). Positions 95 and 101 each coordinate substrate. NAD(+) is bound by residues Asn108, Gln115, and 132–134 (VGN). Positions 134 and 165 each coordinate substrate. His190 acts as the Proton acceptor in catalysis.

It belongs to the LDH/MDH superfamily. MDH type 2 family.

It catalyses the reaction (S)-malate + NAD(+) = oxaloacetate + NADH + H(+). In terms of biological role, catalyzes the reversible oxidation of malate to oxaloacetate. The sequence is that of Malate dehydrogenase from Janthinobacterium sp. (strain Marseille) (Minibacterium massiliensis).